A 490-amino-acid chain; its full sequence is Cobyric acid synthase (490 aa).

The region spanning 252–439 (RLKVVVPVLP…LHGLFESTAA (188 aa)) is the GATase cobBQ-type domain. C333 serves as the catalytic Nucleophile. The active site involves H431.

It belongs to the CobB/CobQ family. CobQ subfamily.

It functions in the pathway cofactor biosynthesis; adenosylcobalamin biosynthesis. In terms of biological role, catalyzes amidations at positions B, D, E, and G on adenosylcobyrinic A,C-diamide. NH(2) groups are provided by glutamine, and one molecule of ATP is hydrogenolyzed for each amidation. The chain is Cobyric acid synthase from Pseudomonas aeruginosa (strain ATCC 15692 / DSM 22644 / CIP 104116 / JCM 14847 / LMG 12228 / 1C / PRS 101 / PAO1).